An 84-amino-acid polypeptide reads, in one-letter code: Defensin-like protein 37 (84 aa).

Positions Met1–Ser24 are cleaved as a signal peptide. Disulfide bonds link Cys46/Cys67, Cys52/Cys79, and Cys56/Cys81.

It belongs to the DEFL family.

Its subcellular location is the secreted. The sequence is that of Defensin-like protein 37 (EDA21) from Arabidopsis thaliana (Mouse-ear cress).